The primary structure comprises 68 residues: Large ribosomal subunit protein uL29 (68 aa).

The protein belongs to the universal ribosomal protein uL29 family.

This Pyrococcus horikoshii (strain ATCC 700860 / DSM 12428 / JCM 9974 / NBRC 100139 / OT-3) protein is Large ribosomal subunit protein uL29 (rpl29).